The chain runs to 319 residues: MSDKLIRAIAKDGMIRIFATETTELVDEASKIHDCTPTAAAALGRMLTAGTMMGAMLKSDKEVVTLQINGGGMAKGVTVTAYSDCSVKGYIGNPHVDLPLNTENGKLNVGEAIGKNGGLTVIKDLGLKDPYVGQVPIYSGEIAEDLAYYFTASEQIPSAVALGVLVDRDHSIKKAGGFIIQLLPGADELLGDLLTYRLDEIPSLTTMLSEGKTIEEVIEFIFDGMDLKILEEETPKYKCDCSREKVERALLSIGYKDLKELYDEGKEEELKCHFCNKAYKFTKEDIGKLLEEKEKSIADEVSEEMKKAEEKEKEEKNKK.

2 disulfides stabilise this stretch: Cys-239-Cys-241 and Cys-272-Cys-275. Residues Glu-300–Lys-319 are disordered.

Belongs to the HSP33 family. Post-translationally, under oxidizing conditions two disulfide bonds are formed involving the reactive cysteines. Under reducing conditions zinc is bound to the reactive cysteines and the protein is inactive.

The protein resides in the cytoplasm. Redox regulated molecular chaperone. Protects both thermally unfolding and oxidatively damaged proteins from irreversible aggregation. Plays an important role in the bacterial defense system toward oxidative stress. The protein is 33 kDa chaperonin of Clostridium perfringens (strain ATCC 13124 / DSM 756 / JCM 1290 / NCIMB 6125 / NCTC 8237 / Type A).